The primary structure comprises 207 residues: Small ribosomal subunit protein uS4 (207 aa).

Residues 31-52 (KAKFDSKPGQHGRTSGARTSDY) are disordered. The S4 RNA-binding domain occupies 97–157 (CRLDNVVYRM…DKSKKQARIV (61 aa)).

This sequence belongs to the universal ribosomal protein uS4 family. Part of the 30S ribosomal subunit. Contacts protein S5. The interaction surface between S4 and S5 is involved in control of translational fidelity.

One of the primary rRNA binding proteins, it binds directly to 16S rRNA where it nucleates assembly of the body of the 30S subunit. In terms of biological role, with S5 and S12 plays an important role in translational accuracy. The chain is Small ribosomal subunit protein uS4 from Acidovorax sp. (strain JS42).